The primary structure comprises 316 residues: Probable protein-L-isoaspartate O-methyltransferase (316 aa).

Residues 103–106, H111, S136, 157–158, 187–188, T263, and Q268 each bind S-adenosyl-L-homocysteine; these read ATIS, EH, and DG. S106 is a catalytic residue.

Belongs to the methyltransferase superfamily. L-isoaspartyl/D-aspartyl protein methyltransferase family.

It localises to the cytoplasm. It is found in the cytosol. It carries out the reaction [protein]-L-isoaspartate + S-adenosyl-L-methionine = [protein]-L-isoaspartate alpha-methyl ester + S-adenosyl-L-homocysteine. Functionally, initiates the repair of damaged proteins by catalyzing methyl esterification of L-isoaspartyl and D-aspartyl residues produced by spontaneous isomerization and racemization of L-aspartyl and L-asparaginyl residues in aging peptides and proteins. The polypeptide is Probable protein-L-isoaspartate O-methyltransferase (pcmA) (Dictyostelium discoideum (Social amoeba)).